A 303-amino-acid polypeptide reads, in one-letter code: Methionyl-tRNA formyltransferase (303 aa).

108–111 (SDLP) provides a ligand contact to (6S)-5,6,7,8-tetrahydrofolate.

The protein belongs to the Fmt family.

The enzyme catalyses L-methionyl-tRNA(fMet) + (6R)-10-formyltetrahydrofolate = N-formyl-L-methionyl-tRNA(fMet) + (6S)-5,6,7,8-tetrahydrofolate + H(+). Functionally, attaches a formyl group to the free amino group of methionyl-tRNA(fMet). The formyl group appears to play a dual role in the initiator identity of N-formylmethionyl-tRNA by promoting its recognition by IF2 and preventing the misappropriation of this tRNA by the elongation apparatus. In Rickettsia prowazekii (strain Madrid E), this protein is Methionyl-tRNA formyltransferase.